Reading from the N-terminus, the 209-residue chain is C-type lectin domain family 6 member A (209 aa).

Residues 1–20 (MVQERQSQGKGVCWTLRLWS) lie on the Cytoplasmic side of the membrane. Residues 21–43 (AAVISMLLLSTCFIASCVVTYQF) traverse the membrane as a helical; Signal-anchor for type II membrane protein segment. At 44 to 209 (IMDQPSRRLY…SICEMKKIYL (166 aa)) the chain is on the extracellular side. Intrachain disulfides connect C64–C78, C79–C90, C107–C202, and C176–C194. A C-type lectin domain is found at 86 to 203 (FGSSCYLIST…CDSKHNSICE (118 aa)). Ca(2+) contacts are provided by V116, N118, and E122. N131 is a glycosylation site (N-linked (GlcNAc...) asparagine). E168, N170, and E174 together coordinate Ca(2+). Alpha-D-mannopyranose is bound by residues 168-170 (EPN), E174, W182, and 190-191 (ND). 3 residues coordinate Ca(2+): N190, D191, and E203.

Associated with FCER1G. Heterodimer with CLEC4D; this heterodimer forms a pattern recognition receptor (PRR) against fungal infection. Expressed by the XS52 DC (dendritic cell) line (at protein level). Expressed constitutively by the epidermis, and skin resident DC appear to be the major source of this expression. Expressed in the spleen and thymus. Expression was undetectable in non-DC lines, including macrophage lines (J774 and Raw), T-cell lines (7-17, HDK-1, and D10), B-cell hybridoma (5C5), a keratinocyte line (Pam 212), and a fibroblast line (NS01).

Its subcellular location is the cell membrane. Functionally, calcium-dependent lectin that acts as a pattern recognition receptor (PRR) of the innate immune system: specifically recognizes and binds alpha-mannans on C.albicans hypheas. Binding of C.albicans alpha-mannans to this receptor complex leads to phosphorylation of the immunoreceptor tyrosine-based activation motif (ITAM) of FCER1G, triggering activation of SYK, CARD9 and NF-kappa-B, consequently driving maturation of antigen-presenting cells and shaping antigen-specific priming of T-cells toward effector T-helper 1 and T-helper 17 cell subtypes. Also recognizes, in a mannose-dependent manner, allergens from house dust mite and fungi, by promoting cysteinyl leukotriene production. Recognizes soluble elements from the eggs of Shistosoma mansoni altering adaptive immune responses. The chain is C-type lectin domain family 6 member A from Mus musculus (Mouse).